We begin with the raw amino-acid sequence, 536 residues long: 2-isopropylmalate synthase (536 aa).

Residues 8–273 form the Pyruvate carboxyltransferase domain; that stretch reads VLIFDTTLRD…FFGKDSESPT (266 aa). Residues D17, H208, H210, and N244 each contribute to the Mn(2+) site. The regulatory domain stretch occupies residues 408-536; sequence KLHLVQVSCG…PQHDVVKANL (129 aa).

The protein belongs to the alpha-IPM synthase/homocitrate synthase family. LeuA type 1 subfamily. As to quaternary structure, homodimer. The cofactor is Mn(2+).

It localises to the cytoplasm. The enzyme catalyses 3-methyl-2-oxobutanoate + acetyl-CoA + H2O = (2S)-2-isopropylmalate + CoA + H(+). Its pathway is amino-acid biosynthesis; L-leucine biosynthesis; L-leucine from 3-methyl-2-oxobutanoate: step 1/4. Its function is as follows. Catalyzes the condensation of the acetyl group of acetyl-CoA with 3-methyl-2-oxobutanoate (2-ketoisovalerate) to form 3-carboxy-3-hydroxy-4-methylpentanoate (2-isopropylmalate). This chain is 2-isopropylmalate synthase, found in Prochlorococcus marinus (strain SARG / CCMP1375 / SS120).